Here is a 461-residue protein sequence, read N- to C-terminus: Nucleobindin-1 (461 aa).

Positions 1-26 (MPPSGPRGTLLLLPLLLLLLLRAVLA) are cleaved as a signal peptide. The O-glycosylated at one site stretch occupies residues 42 to 51 (TESPDTGLYY). At serine 86 the chain carries Phosphoserine; by FAM20C. The residue at position 148 (threonine 148) is a Phosphothreonine; by FAM20C. Residues 150-218 (EARDLELLIQ…QQRRHREHPK (69 aa)) are a coiled coil. A DNA-binding region spans residues 172–218 (HHEEFKRYEMLKEHERRRYLESLGEEQRKEAERKLEEQQRRHREHPK). A compositionally biased stretch (basic and acidic residues) spans 193–210 (SLGEEQRKEAERKLEEQQ). Residues 193–221 (SLGEEQRKEAERKLEEQQRRHREHPKVNV) are disordered. Residues 228–321 (LKEVWEELDG…VTLEEFLAST (94 aa)) form a binds to GNAI2 and GNAI3 region. EF-hand domains are found at residues 240–275 (PNRF…ELEK) and 292–327 (ERLR…KEFG). Ca(2+) is bound by residues aspartate 253, asparagine 255, aspartate 257, glutamate 264, aspartate 305, asparagine 307, aspartate 309, and glutamate 316. A GBA motif is present at residues 303 to 333 (NVDTNQDRLVTLEEFLASTQRKEFGDTGEGW). Residues 341–407 (AYTEEELRRF…QRKQQQQQQQ (67 aa)) adopt a coiled-coil conformation. Residues 368 to 461 (LSQETEALGR…LPEVEVPQHL (94 aa)) form a disordered region. At serine 369 the chain carries Phosphoserine; by FAM20C. The span at 437-461 (DQKEVDTSEKKLLERLPEVEVPQHL) shows a compositional bias: basic and acidic residues.

It belongs to the nucleobindin family. As to quaternary structure, interacts (via GBA motif) with guanine nucleotide-binding protein G(i) alpha subunits GNAI1, GNAI2 and GNAI3 with higher affinity for GNAI1 and GNAI3 than for GNAI2. Preferentially interacts with inactive rather than active GNAI3. Interaction with GNAI3 is inhibited when NUCB1 binds calcium, probably due to a conformational change which renders the GBA motif inaccessible. Post-translationally, O-glycosylated. Expressed both in fetal and adult heart, lung, liver, kidney and brain, and in adult skeletal muscle, placenta and pancreas.

The protein resides in the golgi apparatus. It localises to the cis-Golgi network membrane. It is found in the cytoplasm. Its subcellular location is the secreted. Its function is as follows. Major calcium-binding protein of the Golgi which may have a role in calcium homeostasis. Acts as a non-receptor guanine nucleotide exchange factor which binds to and activates alpha subunits of guanine nucleotide-binding proteins (G proteins). This is Nucleobindin-1 (NUCB1) from Homo sapiens (Human).